We begin with the raw amino-acid sequence, 155 residues long: Pathogenesis-related protein STH-21 (155 aa).

This sequence belongs to the BetVI family.

The sequence is that of Pathogenesis-related protein STH-21 (STH-21) from Solanum tuberosum (Potato).